The following is a 397-amino-acid chain: 8-amino-7-oxononanoate synthase (397 aa).

Arg24 contacts substrate. Residue Gly110–Tyr111 coordinates pyridoxal 5'-phosphate. Residue His135 participates in substrate binding. 3 residues coordinate pyridoxal 5'-phosphate: Ser183, His211, and Thr240. Lys243 carries the post-translational modification N6-(pyridoxal phosphate)lysine. Substrate is bound at residue Thr357.

The protein belongs to the class-II pyridoxal-phosphate-dependent aminotransferase family. BioF subfamily. In terms of assembly, homodimer. It depends on pyridoxal 5'-phosphate as a cofactor.

It catalyses the reaction 6-carboxyhexanoyl-[ACP] + L-alanine + H(+) = (8S)-8-amino-7-oxononanoate + holo-[ACP] + CO2. The protein operates within cofactor biosynthesis; biotin biosynthesis. Functionally, catalyzes the decarboxylative condensation of pimeloyl-[acyl-carrier protein] and L-alanine to produce 8-amino-7-oxononanoate (AON), [acyl-carrier protein], and carbon dioxide. This Hydrogenovibrio crunogenus (strain DSM 25203 / XCL-2) (Thiomicrospira crunogena) protein is 8-amino-7-oxononanoate synthase.